A 767-amino-acid chain; its full sequence is MQTFRLTSTGRNILRPDELAFQPREEIPYKSFHPDLQIDEPLEILEGDHTQYAGLRDSLVTYKSENSYVLKALLNAKIENVKPVGVQTENINPQEKKFGYKTAKQLDWSPDEYFKFVAIHPYSKTSFPVSYDLDELDTMWLTYYNEFQLSSNSEWENVSKEFLEIVLTIIEREWLYLEAWMPKIEPVRVEDELDGRCVICNEAECENSNAIVFCDNCNTSVHQNCYGIPFVPEGQWFCKKCLLAPHEVICCAFCPDRDGAFCTTLDGRWCHTICAIAIPEISFHDTSRLDLVRNIASIPKSRWKLVCCICKLRWGTCVQCSDKNCYAAYHITCARRAGFFYKIYSHSASYDSVDMETYCDKHTPPDYLNGLMKRLFPLAELYYKRMATDVPLNFQATKAPDFVPEGPWKSHPLPAFIVDKVTKVLLSYNVKRQDLPSIVTDICKFYHMKRRSRKDAPLLKSQLLMDSLENLPVRASKDRVRSLEVAKALQDQYQSLLTLVESTAKRQLLKCQLSNLRKKFLNLNYFPAQRLLQDTLVKIIDLDVDGLFNMPLDNGWIGWVELKRQVFSYQIGSISSLEKKLEPIWDVDGVIQCIDDMEQLTAMVQFAQKTEGEVKKLFIKAKIYFESLSLDERGNLKVPSLGINGLEYDNWPGLNELEMSQLDIPSQGNLKSLHDFIEGLDLNEKIGKFPISMFQNQVAQFSTIEIPKMSGRANGMHNFHSEDVTGQSNHALPNSVTKKNGTKQPYTKNSLPFNERITRSKAKKNYS.

The segment at 194-244 (DGRCVICNEAECENSNAIVFCDNCNTSVHQNCYGIPFVPEGQWFCKKCLLA) adopts a PHD-type 1 zinc-finger fold. Residues 248-281 (VICCAFCPDRDGAFCTTLDGRWCHTICAIAIPEI) form a C2HC pre-PHD-type zinc finger. A PHD-type 2 zinc finger spans residues 305 to 363 (LVCCICKLRWGTCVQCSDKNCYAAYHITCARRAGFFYKIYSHSASYDSVDMETYCDKHT). Polar residues predominate over residues 724-752 (VTGQSNHALPNSVTKKNGTKQPYTKNSLP). Residues 724–767 (VTGQSNHALPNSVTKKNGTKQPYTKNSLPFNERITRSKAKKNYS) are disordered.

In terms of assembly, component of the mst2 complex composed of at least eaf6, mst2, nto1, pdp3, ptf1, ptf2 and tfg3.

It localises to the cytoplasm. Its subcellular location is the nucleus. Its function is as follows. Component of the mst2 complex which is a highly specific H3 lysine 14 (H3K14) acetyltransferase that functions together with gcn5 to regulate global levels of H3K14 acetylation (H3K14ac), critical for DNA damage checkpoint activation. The protein is Mst2 complex subunit nto1 (nto1) of Schizosaccharomyces pombe (strain 972 / ATCC 24843) (Fission yeast).